We begin with the raw amino-acid sequence, 704 residues long: Elongation factor G (704 aa).

Positions 8 to 291 constitute a tr-type G domain; it reads DKVRNIGIMA…AVVDYLASPL (284 aa). GTP contacts are provided by residues 17–24, 90–94, and 144–147; these read AHIDAGKT, DTPGH, and NKMD.

The protein belongs to the TRAFAC class translation factor GTPase superfamily. Classic translation factor GTPase family. EF-G/EF-2 subfamily.

The protein localises to the cytoplasm. Its function is as follows. Catalyzes the GTP-dependent ribosomal translocation step during translation elongation. During this step, the ribosome changes from the pre-translocational (PRE) to the post-translocational (POST) state as the newly formed A-site-bound peptidyl-tRNA and P-site-bound deacylated tRNA move to the P and E sites, respectively. Catalyzes the coordinated movement of the two tRNA molecules, the mRNA and conformational changes in the ribosome. The chain is Elongation factor G from Chlorobium luteolum (strain DSM 273 / BCRC 81028 / 2530) (Pelodictyon luteolum).